The primary structure comprises 1477 residues: Neurexin-1 (1477 aa).

A signal peptide spans 1-30 (MGTALLQRGGCFLLCLSLLLLGCWAELGSG). Positions 31-217 (LEFPGAEGQW…PPNSGGGSPC (187 aa)) constitute a Laminin G-like 1 domain. Residues 31 to 1401 (LEFPGAEGQW…EVIRESSSTT (1371 aa)) lie on the Extracellular side of the membrane. N-linked (GlcNAc...) asparagine glycosylation is found at N125 and N190. The disordered stretch occupies residues 198–221 (DSGEVKLDDEPPNSGGGSPCEAGE). The 44-residue stretch at 213-256 (GGSPCEAGEEGEGGVCLNGGVCSVVDDQAVCDCSRTGFRGKDCS) folds into the EGF-like 1 domain. 2 cysteine pairs are disulfide-bonded: C228-C243 and C245-C255. Laminin G-like domains lie at 283–473 (IATF…AFKC) and 480–672 (DPIT…KPSC). Ca(2+) is bound by residues D329, L346, and M407. 5 cysteine pairs are disulfide-bonded: C437–C473, C643–C672, C680–C691, C685–C700, and C702–C712. Residues 676-713 (TAKPCLSNPCKNNGMCRDGWNRYVCDCSGTGYLGRSCE) enclose the EGF-like 2 domain. Laminin G-like domains are found at residues 718 to 891 (VLSY…IDYC) and 905 to 1080 (DPVT…ERGC). Ca(2+)-binding residues include D765 and L782. An N-linked (GlcNAc...) asparagine glycan is attached at N790. A Ca(2+)-binding site is contributed by R841. 5 cysteine pairs are disulfide-bonded: C883/C891, C1052/C1080, C1087/C1098, C1092/C1107, and C1109/C1119. An EGF-like 3 domain is found at 1083–1120 (PSTTCQEDSCSNQGVCLQQWDGFSCDCSMTSFSGPLCN). The Laminin G-like 6 domain maps to 1126 to 1294 (YIFSKGGGQI…DANIAIVGNV (169 aa)). 2 residues coordinate Ca(2+): D1176 and V1193. Residue N1223 is glycosylated (N-linked (GlcNAc...) asparagine). 2 residues coordinate Ca(2+): I1245 and N1247. Residues 1325–1390 (TTTLATSTAR…AGGREPYPGS (66 aa)) form a disordered region. A glycan (O-linked (Xyl...) (heparan sulfate) serine) is linked at S1355. A helical membrane pass occupies residues 1402-1422 (GMVVGIVAAAALCILILLYAM). At 1423 to 1477 (YKYRNRDEGSYHVDESRNYISNSAQSNGAVVKEKQPSSAKSSNKNKKNKDKEYYV) the chain is on the cytoplasmic side. An interaction with CASK region spans residues 1444–1470 (NSAQSNGAVVKEKQPSSAKSSNKNKKN). A disordered region spans residues 1444–1477 (NSAQSNGAVVKEKQPSSAKSSNKNKKNKDKEYYV).

The protein belongs to the neurexin family. Interacts (via laminin G-like domain 2 and/or laminin G-like domain 6) with NLGN1 forming a heterotetramer, where one NLGN1 dimer interacts with one NRXN1 dimer. Also interacts (via laminin G-like domain 2 and/or laminin G-like domain 6) with NLGN2, NLGN3 and NLGN4L; interactions with NLGN1, NLGN2, NLGN3 and NLGN4L are calcium-dependent. Interacts (via cytoplasmic C-terminal region) with CASK (via the PDZ, SH3 and guanylate kinase-like domains). Interacts (via cytoplasmic C-terminus) with CASKIN1 and APBA1. Interacts (via laminin G-like domain 2) with NXPH1 and NXPH3. Alpha-type isoforms (neurexin-1-alpha) interact (via laminin G-like domain 2 and/or laminin G-like domain 6) with DAG1 (via alpha-dystroglycan chain). Interacts with LRRTM1, LRRTM2, LRRTM3 and LRRTM4. Interacts with SYT13 and SYTL1. Interacts with CBLN1, CBLN2 and, less avidly, with CBLN4. Interacts with CLSTN3. Post-translationally, O-glycosylated; contains heparan sulfate. Heparan sulfate attachment is required for synapse development by mediating interactions with neuroligins and LRRTM2. In terms of tissue distribution, brain.

The protein localises to the presynaptic cell membrane. Cell surface protein involved in cell-cell-interactions, exocytosis of secretory granules and regulation of signal transmission. Function is isoform-specific. Alpha-type isoforms have a long N-terminus with six laminin G-like domains and play an important role in synaptic signal transmission. Alpha-type isoforms play a role in the regulation of calcium channel activity and Ca(2+)-triggered neurotransmitter release at synapses and at neuromuscular junctions. They play an important role in Ca(2+)-triggered exocytosis of secretory granules in pituitary gland. They may affect their functions at synapses and in endocrine cells via their interactions with proteins from the exocytotic machinery. Likewise, alpha-type isoforms play a role in regulating the activity of postsynaptic NMDA receptors, a subtype of glutamate-gated ion channels. Both alpha-type and beta-type isoforms may play a role in the formation or maintenance of synaptic junctions via their interactions (via the extracellular domains) with neuroligin family members, CBLN1 or CBLN2. In vitro, triggers the de novo formation of presynaptic structures. May be involved in specification of excitatory synapses. Alpha-type isoforms were first identified as receptors for alpha-latrotoxin from spider venom. This is Neurexin-1 (NRXN1) from Homo sapiens (Human).